The chain runs to 73 residues: Translation initiation factor IF-1 (73 aa).

The S1-like domain occupies 1–73; sequence MDIKEEAIET…TKGRIVYREK (73 aa).

It belongs to the IF-1 family. As to quaternary structure, component of the 30S ribosomal translation pre-initiation complex which assembles on the 30S ribosome in the order IF-2 and IF-3, IF-1 and N-formylmethionyl-tRNA(fMet); mRNA recruitment can occur at any time during PIC assembly.

The protein localises to the cytoplasm. Its function is as follows. One of the essential components for the initiation of protein synthesis. Stabilizes the binding of IF-2 and IF-3 on the 30S subunit to which N-formylmethionyl-tRNA(fMet) subsequently binds. Helps modulate mRNA selection, yielding the 30S pre-initiation complex (PIC). Upon addition of the 50S ribosomal subunit IF-1, IF-2 and IF-3 are released leaving the mature 70S translation initiation complex. This Borreliella afzelii (strain PKo) (Borrelia afzelii) protein is Translation initiation factor IF-1.